We begin with the raw amino-acid sequence, 168 residues long: Large ribosomal subunit protein uL10 (168 aa).

Belongs to the universal ribosomal protein uL10 family. Part of the ribosomal stalk of the 50S ribosomal subunit. The N-terminus interacts with L11 and the large rRNA to form the base of the stalk. The C-terminus forms an elongated spine to which L12 dimers bind in a sequential fashion forming a multimeric L10(L12)X complex.

Its function is as follows. Forms part of the ribosomal stalk, playing a central role in the interaction of the ribosome with GTP-bound translation factors. The polypeptide is Large ribosomal subunit protein uL10 (Laribacter hongkongensis (strain HLHK9)).